Consider the following 392-residue polypeptide: p21-activated protein kinase-interacting protein 1 (392 aa).

6 WD repeats span residues 33-72, 73-113, 114-155, 156-195, 196-235, and 236-275; these read VADF…MKKK, IEHG…AKKW, ECLK…LVEG, RSAF…LDTA, SISG…CDSL, and VCLC…KMWK. The tract at residues 312–392 is disordered; the sequence is SLPPAAEPSP…RKKKKIKTMQ (81 aa). At serine 320 the chain carries Phosphoserine. The span at 325–345 shows a compositional bias: basic and acidic residues; that stretch reads EQSKIGKKEPGDTVHKEEKRS. The segment covering 381-392 has biased composition (basic residues); the sequence is KKRKKKKIKTMQ.

In terms of assembly, interacts with PAK1. In terms of tissue distribution, expressed in brain, colon, heart, kidney, liver, lung, muscle, peripheral blood leukocytes, placenta, small intestine, spleen and thymus.

The protein localises to the nucleus. It is found in the nucleolus. Negatively regulates the PAK1 kinase. PAK1 is a member of the PAK kinase family, which has been shown to play a positive role in the regulation of signaling pathways involving MAPK8 and RELA. PAK1 exists as an inactive homodimer, which is activated by binding of small GTPases such as CDC42 to an N-terminal regulatory domain. PAK1IP1 also binds to the N-terminus of PAK1, and inhibits the specific activation of PAK1 by CDC42. May be involved in ribosomal large subunit assembly. This is p21-activated protein kinase-interacting protein 1 (PAK1IP1) from Homo sapiens (Human).